Consider the following 204-residue polypeptide: ATP-dependent Clp protease proteolytic subunit 1 (204 aa).

S97 serves as the catalytic Nucleophile. The active site involves H122.

Belongs to the peptidase S14 family. Fourteen ClpP subunits assemble into 2 heptameric rings which stack back to back to give a disk-like structure with a central cavity, resembling the structure of eukaryotic proteasomes.

The protein localises to the cytoplasm. It catalyses the reaction Hydrolysis of proteins to small peptides in the presence of ATP and magnesium. alpha-casein is the usual test substrate. In the absence of ATP, only oligopeptides shorter than five residues are hydrolyzed (such as succinyl-Leu-Tyr-|-NHMec, and Leu-Tyr-Leu-|-Tyr-Trp, in which cleavage of the -Tyr-|-Leu- and -Tyr-|-Trp bonds also occurs).. Cleaves peptides in various proteins in a process that requires ATP hydrolysis. Has a chymotrypsin-like activity. Plays a major role in the degradation of misfolded proteins. In Nostoc sp. (strain PCC 7120 / SAG 25.82 / UTEX 2576), this protein is ATP-dependent Clp protease proteolytic subunit 1.